Consider the following 90-residue polypeptide: Guanine nucleotide-binding protein subunit gamma (90 aa).

A lipid anchor (S-palmitoyl cysteine) is attached at C86. C87 carries the post-translational modification Cysteine methyl ester. The S-farnesyl cysteine moiety is linked to residue C87. Positions 88–90 (CIM) are cleaved as a propeptide — removed in mature form.

It belongs to the G protein gamma family. G proteins are composed of 3 units, alpha, beta and gamma.

The protein resides in the membrane. In Eremothecium gossypii (strain ATCC 10895 / CBS 109.51 / FGSC 9923 / NRRL Y-1056) (Yeast), this protein is Guanine nucleotide-binding protein subunit gamma.